The primary structure comprises 45 residues: Large ribosomal subunit protein bL34 (45 aa).

This sequence belongs to the bacterial ribosomal protein bL34 family.

This Salinispora arenicola (strain CNS-205) protein is Large ribosomal subunit protein bL34.